Consider the following 192-residue polypeptide: Ribosomal RNA small subunit methyltransferase G (192 aa).

Residues Gly59, 111–112, and Arg124 each bind S-adenosyl-L-methionine; that span reads IE.

Belongs to the methyltransferase superfamily. RNA methyltransferase RsmG family.

The protein resides in the cytoplasm. In terms of biological role, specifically methylates the N7 position of a guanine in 16S rRNA. The polypeptide is Ribosomal RNA small subunit methyltransferase G (Mycoplasma genitalium (strain ATCC 33530 / DSM 19775 / NCTC 10195 / G37) (Mycoplasmoides genitalium)).